The primary structure comprises 100 residues: uncharacterized protein (100 aa).

A disordered region spans residues 78–100 (KPYRTESGTSSSNRMMLPPRQHV).

This is an uncharacterized protein from Caenorhabditis elegans.